The sequence spans 503 residues: Maturase K (503 aa).

Belongs to the intron maturase 2 family. MatK subfamily.

It is found in the plastid. The protein localises to the chloroplast. In terms of biological role, usually encoded in the trnK tRNA gene intron. Probably assists in splicing its own and other chloroplast group II introns. The polypeptide is Maturase K (Thryptomene saxicola (Rock thryptomene)).